Here is a 383-residue protein sequence, read N- to C-terminus: Subtelomeric hrmA-associated cluster protein AFUB_078970 (383 aa).

2 disordered regions span residues 118 to 145 (NPVS…KDDD) and 249 to 318 (QATQ…SARP). A compositionally biased stretch (low complexity) spans 119–134 (PVSEVPESPPSTVKSS). One can recognise a Myb-like domain in the interval 318 to 364 (PYSAAEDDILQTLVARGLAWEEIEKEFGLRFAKRTMRSLQMRWSRKL).

Myb-like domain-containing protein; part of the subtelomeric hrmA-associated cluster (HAC) containing genes that alter the hyphal surface (such as reduced total chitin or increased beta-glucan exposure) and perturb inter-hyphal interactions within the developing biofilms, resulting in a loss of vertically aligned polarized growing filaments. Consequently, this hypoxia-typic morphotype (called H-MORPH) with altered biofilm architecture leads to increased hypoxia fitness, increased host inflammation, rapid disease progression, and mortality in a murine model of invasive aspergillosis. The polypeptide is Subtelomeric hrmA-associated cluster protein AFUB_078970 (Aspergillus fumigatus (strain CBS 144.89 / FGSC A1163 / CEA10) (Neosartorya fumigata)).